A 626-amino-acid polypeptide reads, in one-letter code: Receptor-like protein 4 (626 aa).

The signal sequence occupies residues 1–22 (MMLRFILASLLLSSFSLYSSLA). Over 23–549 (RPAPYALRIS…CGPHLSSGAK (527 aa)) the chain is Extracellular. N-linked (GlcNAc...) asparagine glycosylation is found at Asn-61, Asn-282, Asn-333, and Asn-417. LRR repeat units lie at residues 420–444 (RWFIDGLDLDNQGLKGFLPNDISKL), 445–468 (KHLQSINLSENNIRGGIPASLGSV), 470–492 (SLEVLDLSYNSFNGSIPETLGEL), and 493–516 (TSLRILNLNGNSLSGKVPAAVGGR). N-linked (GlcNAc...) asparagine glycosylation is found at Asn-451 and Asn-482. Asn-524 carries N-linked (GlcNAc...) asparagine glycosylation. Residues 550–570 (IGIAFGVSLAFLLIVACAMIW) traverse the membrane as a helical segment. Topologically, residues 571–626 (WKRRQNILRAQQIAARGAPYAKKRTHVSHDIQMSRHGHNNHGQARTAVENGPSLLS) are cytoplasmic. The tract at residues 603–626 (MSRHGHNNHGQARTAVENGPSLLS) is disordered.

This sequence belongs to the RLP family.

It localises to the cell membrane. In Arabidopsis thaliana (Mouse-ear cress), this protein is Receptor-like protein 4.